The chain runs to 301 residues: Transcriptional activator protein NhaR (301 aa).

The HTH lysR-type domain maps to 6–63 (INYNHLYYFWHVYKEGSVVGAAEALYLTPQTITGQIRALEERLQGKLFKRKGRGLEPS). A DNA-binding region (H-T-H motif) is located at residues 23-42 (VVGAAEALYLTPQTITGQIR).

The protein belongs to the LysR transcriptional regulatory family.

It is found in the cytoplasm. In terms of biological role, plays a role in the positive regulation of NhaA. This Escherichia coli (strain K12) protein is Transcriptional activator protein NhaR (nhaR).